The primary structure comprises 120 residues: Small ribosomal subunit protein uS19 (120 aa).

Belongs to the universal ribosomal protein uS19 family.

In Naegleria gruberi (Amoeba), this protein is Small ribosomal subunit protein uS19 (RPS15).